We begin with the raw amino-acid sequence, 506 residues long: MPSKTKYNLVDDGHDLRIPLHNEDAFQHGICFEAKYVGSLDVPRPNSRVEIVAAMRRIRYEFKAKNIKKKKVSIMVSVDGVKVILKKKKKLLLLQKKEWTWDESKMLVMQDPIYRIFYVSHDSQDLKIFSYIARDGASNIFRCNVFKSKKKSQAMRIVRTVGQAFEVCHKLSLQHTQQNADGQEDGESERNSNSSGDPGRQLTGAERASTATAEETDIDAVEVPLPGNDVLEFSRGVTDLDAVGKEGGSHTGSKVSHPQEPMLTASPRMLLPSSSSKPPGLGTETPLSTHHQMQLLQQLLQQQQQQTQVAVAQVHLLKDQLAAEAAARLEAQARVHQLLLQNKDMLQHISLLVKQVQELELKLSGQNAMGSQDSLLEITFRSGALPVLCDPTTPKPEDLHSPPLGAGLADFAHPAGSPLGRRDCLVKLECFRFLPPEDTPPPAQGEALLGGLELIKFRESGIASEYESNTDESEERDSWSQEELPRLLNVLQRQELGDGLDDEIAV.

In terms of domain architecture, PID spans 26–196 (FQHGICFEAK…ESERNSNSSG (171 aa)). Disordered stretches follow at residues 175–224 (HTQQ…VEVP) and 241–260 (DAVGKEGGSHTGSKVSHPQE). Phosphoserine occurs at positions 188, 192, and 195. The segment covering 203 to 213 (TGAERASTATA) has biased composition (low complexity). Position 266 is a phosphoserine (S266). Positions 322–363 (AAEAAARLEAQARVHQLLLQNKDMLQHISLLVKQVQELELKL) form a coiled coil. S371, S374, S401, and S417 each carry phosphoserine. The interval 494-506 (QELGDGLDDEIAV) is interaction with NOS1. The PDZ-binding motif lies at 504–506 (IAV).

In terms of assembly, interacts with the PDZ domain of NOS1 or the second PDZ domain of DLG4 through its C-terminus. Interacts with RASD1 and SYN1, SYN2 and SYN3 via its PID domain. Forms a ternary complex with NOS1 and RASD1. Forms a ternary complex with NOS1 and SYN1. Expressed in kidney glomeruli podocytes.

The protein localises to the cell projection. It localises to the filopodium. It is found in the podosome. Its function is as follows. Adapter protein involved in neuronal nitric-oxide (NO) synthesis regulation via its association with nNOS/NOS1. The complex formed with NOS1 and synapsins is necessary for specific NO and synapsin functions at a presynaptic level. Mediates an indirect interaction between NOS1 and RASD1 leading to enhance the ability of NOS1 to activate RASD1. Competes with DLG4 for interaction with NOS1, possibly affecting NOS1 activity by regulating the interaction between NOS1 and DLG4. In kidney podocytes, plays a role in podosomes and filopodia formation through CDC42 activation. The protein is Carboxyl-terminal PDZ ligand of neuronal nitric oxide synthase protein of Homo sapiens (Human).